The sequence spans 241 residues: B-cell receptor-associated protein 29 (241 aa).

At 1-6 the chain is on the lumenal side; sequence MTLQWA. Residues 7–27 form a helical membrane-spanning segment; sequence AVATFLYAEIGLILIFCLPFI. Residues 28 to 43 lie on the Cytoplasmic side of the membrane; that stretch reads PPQRWQKIFSFNVWGK. Residues 44–64 form a helical membrane-spanning segment; the sequence is IATFWNKAFLTIIILLIVLFL. Residues 65-103 lie on the Lumenal side of the membrane; that stretch reads DAVREVRKYSSVHTIEKSSTSRPDAYEHTQMKLFRSQRN. The chain crosses the membrane as a helical span at residues 104–124; sequence LYISGFSLFFWLVLRRLVTLI. The Cytoplasmic portion of the chain corresponds to 125–241; that stretch reads TQLAKELSNK…RLERGNKKRL (117 aa). Residues 166 to 233 adopt a coiled-coil conformation; it reads GKDEECVLEA…KEHSELQDRL (68 aa). Positions 198–223 are disordered; the sequence is LSKAQNDVMEMKMQSERLSKEYDQLL. Positions 206–223 are enriched in basic and acidic residues; the sequence is MEMKMQSERLSKEYDQLL. The short motif at 238 to 241 is the Di-lysine motif element; the sequence is KKRL.

It belongs to the BCAP29/BCAP31 family. In terms of assembly, homodimer. Heterodimer with BCAP31. Binds CASP8 (isoform 9) as a complex containing BCAP31, BCAP29, BCL2 and/or BCL2L1. Interacts with VAMP3, VAMP1 and membrane IgD immunoglobulins. May interact with ACTG1 and non-muscle myosin II.

The protein resides in the endoplasmic reticulum membrane. May play a role in anterograde transport of membrane proteins from the endoplasmic reticulum to the Golgi. May be involved in CASP8-mediated apoptosis. The chain is B-cell receptor-associated protein 29 (BCAP29) from Homo sapiens (Human).